We begin with the raw amino-acid sequence, 122 residues long: MARIAGVDLPREKRIEVALTYIYGIGRSTARRVIRETGVDPDTRVRDLAEGEIAALRRYIDENLKVEGDLKREVNQNIRRLMDIGCYRGLRHRRGLPVRGQRTKTNARQRKGPRPAIGGRKK.

Positions Arg94–Lys122 are disordered.

It belongs to the universal ribosomal protein uS13 family. Part of the 30S ribosomal subunit. Forms a loose heterodimer with protein S19. Forms two bridges to the 50S subunit in the 70S ribosome.

Located at the top of the head of the 30S subunit, it contacts several helices of the 16S rRNA. In the 70S ribosome it contacts the 23S rRNA (bridge B1a) and protein L5 of the 50S subunit (bridge B1b), connecting the 2 subunits; these bridges are implicated in subunit movement. Contacts the tRNAs in the A and P-sites. The polypeptide is Small ribosomal subunit protein uS13 (Rubrobacter xylanophilus (strain DSM 9941 / JCM 11954 / NBRC 16129 / PRD-1)).